The primary structure comprises 511 residues: Coatomer subunit delta (511 aa).

Basic and acidic residues predominate over residues 168–177 (QARRDAERQG). The segment at 168 to 196 (QARRDAERQGKKAPGFGGFGSSTVSGGST) is disordered. Serine 223 bears the Phosphoserine mark. Lysine 233 and lysine 241 each carry N6-acetyllysine. Serine 244 is subject to Phosphoserine. An MHD domain is found at 271-511 (MESVHMKIEE…TFLVDKYEIL (241 aa)). N6-acetyllysine occurs at positions 309 and 351. Serine 493 carries the post-translational modification Phosphoserine.

Belongs to the adaptor complexes medium subunit family. Delta-COP subfamily. In terms of assembly, oligomeric complex that consists of at least the alpha, beta, beta', gamma, delta, epsilon and zeta subunits. Ubiquitously expressed.

The protein localises to the cytoplasm. Its subcellular location is the golgi apparatus membrane. It is found in the cytoplasmic vesicle. It localises to the COPI-coated vesicle membrane. Functionally, the coatomer is a cytosolic protein complex that binds to dilysine motifs and reversibly associates with Golgi non-clathrin-coated vesicles, which further mediate biosynthetic protein transport from the ER, via the Golgi up to the trans Golgi network. Coatomer complex is required for budding from Golgi membranes, and is essential for the retrograde Golgi-to-ER transport of dilysine-tagged proteins. In mammals, the coatomer can only be recruited by membranes associated to ADP-ribosylation factors (ARFs), which are small GTP-binding proteins; the complex also influences the Golgi structural integrity, as well as the processing, activity, and endocytic recycling of LDL receptors. This Bos taurus (Bovine) protein is Coatomer subunit delta (ARCN1).